A 426-amino-acid polypeptide reads, in one-letter code: Enolase (426 aa).

Glutamine 163 contributes to the (2R)-2-phosphoglycerate binding site. The Proton donor role is filled by glutamate 205. The Mg(2+) site is built by aspartate 242, glutamate 283, and aspartate 310. (2R)-2-phosphoglycerate-binding residues include lysine 335, arginine 364, serine 365, and lysine 386. Lysine 335 (proton acceptor) is an active-site residue.

The protein belongs to the enolase family. Requires Mg(2+) as cofactor.

It is found in the cytoplasm. It localises to the secreted. The protein localises to the cell surface. It catalyses the reaction (2R)-2-phosphoglycerate = phosphoenolpyruvate + H2O. It functions in the pathway carbohydrate degradation; glycolysis; pyruvate from D-glyceraldehyde 3-phosphate: step 4/5. Its function is as follows. Catalyzes the reversible conversion of 2-phosphoglycerate (2-PG) into phosphoenolpyruvate (PEP). It is essential for the degradation of carbohydrates via glycolysis. The sequence is that of Enolase from Paenarthrobacter aurescens (strain TC1).